The chain runs to 81 residues: Apolipoprotein C-I, acidic form (81 aa).

A signal peptide spans 1–24; that stretch reads MRLFLSLLVVVLSMVLKGPTPAQG.

The protein belongs to the apolipoprotein C1 family.

The protein localises to the secreted. This is Apolipoprotein C-I, acidic form (APOC1A) from Macaca fascicularis (Crab-eating macaque).